We begin with the raw amino-acid sequence, 411 residues long: uncharacterized protein (411 aa).

In terms of domain architecture, UmuC spans 20 to 199 (FLYFDFDAFF…LPITEIPGIG (180 aa)).

Belongs to the DNA polymerase type-Y family.

This is an uncharacterized protein from Mycoplasma genitalium (strain ATCC 33530 / DSM 19775 / NCTC 10195 / G37) (Mycoplasmoides genitalium).